The following is a 30-amino-acid chain: Dendrotoxin A (30 aa).

An intrachain disulfide couples Cys-3 to Cys-22.

Belongs to the three-finger toxin family. Short-chain subfamily. Acn-esterase inhibitor sub-subfamily. Contains 4 disulfide bonds. As to expression, expressed by the venom gland.

Its subcellular location is the secreted. Functionally, inhibits acetylcholinesterase. Has been described to inhibit both the slowly and the rapidly inactivating phases of potassium efflux. The sequence is that of Dendrotoxin A from Dendroaspis angusticeps (Eastern green mamba).